Here is a 307-residue protein sequence, read N- to C-terminus: Ribosomal RNA small subunit methyltransferase A (307 aa).

Residues N35, V37, G62, E83, D113, and N136 each contribute to the S-adenosyl-L-methionine site.

This sequence belongs to the class I-like SAM-binding methyltransferase superfamily. rRNA adenine N(6)-methyltransferase family. RsmA subfamily.

The protein localises to the cytoplasm. It carries out the reaction adenosine(1518)/adenosine(1519) in 16S rRNA + 4 S-adenosyl-L-methionine = N(6)-dimethyladenosine(1518)/N(6)-dimethyladenosine(1519) in 16S rRNA + 4 S-adenosyl-L-homocysteine + 4 H(+). Its function is as follows. Specifically dimethylates two adjacent adenosines (A1518 and A1519) in the loop of a conserved hairpin near the 3'-end of 16S rRNA in the 30S particle. May play a critical role in biogenesis of 30S subunits. The protein is Ribosomal RNA small subunit methyltransferase A of Bifidobacterium longum (strain DJO10A).